Here is a 372-residue protein sequence, read N- to C-terminus: Mannan endo-1,4-beta-mannosidase 8 (372 aa).

Tryptophan 57 and asparagine 172 together coordinate substrate. The active-site Proton donor is the glutamate 173. Position 253 (tyrosine 253) interacts with substrate. Glutamate 293 serves as the catalytic Nucleophile. Residue tryptophan 335 participates in substrate binding.

This sequence belongs to the glycosyl hydrolase 5 (cellulase A) family. As to expression, expressed in stems and leaves and seeds.

It carries out the reaction Random hydrolysis of (1-&gt;4)-beta-D-mannosidic linkages in mannans, galactomannans and glucomannans.. This is Mannan endo-1,4-beta-mannosidase 8 (MAN8) from Oryza sativa subsp. japonica (Rice).